A 166-amino-acid chain; its full sequence is Bacterial non-heme ferritin (166 aa).

Residues 2-145 (LSKELLAALN…THIDYLTRIG (144 aa)) form the Ferritin-like diiron domain. 5 residues coordinate Fe cation: Glu-17, Glu-50, His-53, Glu-94, and Gln-127.

Belongs to the ferritin family. Prokaryotic subfamily.

The protein localises to the cytoplasm. The catalysed reaction is 4 Fe(2+) + O2 + 6 H2O = 4 iron(III) oxide-hydroxide + 12 H(+). Its function is as follows. Iron-storage protein. The protein is Bacterial non-heme ferritin (ftnA) of Staphylococcus epidermidis (strain ATCC 35984 / DSM 28319 / BCRC 17069 / CCUG 31568 / BM 3577 / RP62A).